The sequence spans 21 residues: YQRXSRYYYYXGPPDDIDDRY.

The segment covering tyrosine 1–proline 14 has biased composition (low complexity). Residues tyrosine 1–tyrosine 21 are disordered.

This sequence belongs to the N16 matrix protein family. As to quaternary structure, homooligomer; disulfide-linked. May also be disulfide-linked to insoluble organic matrix. Post-translationally, according to PubMed:11250534, amino acids 4 and 11 may be sulfated or phosphorylated. By similarity with the N14 matrix protein, amino-acid 4 may be a cysteine involved in a disulfide bond. As to expression, component of conchiolin, the organic matrix of nacre. Is dispersed in calcium carbonate and also linked by disulfide bonds to the organic core of nacre.

Its subcellular location is the secreted. The protein localises to the extracellular space. It is found in the extracellular matrix. Functionally, may be specifically involved in the formation of the nacreous layer. The sequence is that of Conchiolin protein p20 from Pinctada maxima (Silver-lipped pearl oyster).